Here is a 268-residue protein sequence, read N- to C-terminus: Thymidylate synthase (268 aa).

R27 contacts dUMP. Residue H57 coordinates (6R)-5,10-methylene-5,6,7,8-tetrahydrofolate. 132-133 (RR) is a dUMP binding site. C152 serves as the catalytic Nucleophile. Residues 172–175 (RSAD), N183, and 213–215 (HVY) contribute to the dUMP site. Position 175 (D175) interacts with (6R)-5,10-methylene-5,6,7,8-tetrahydrofolate. A267 provides a ligand contact to (6R)-5,10-methylene-5,6,7,8-tetrahydrofolate.

The protein belongs to the thymidylate synthase family. Bacterial-type ThyA subfamily. As to quaternary structure, homodimer.

It localises to the cytoplasm. The catalysed reaction is dUMP + (6R)-5,10-methylene-5,6,7,8-tetrahydrofolate = 7,8-dihydrofolate + dTMP. Its pathway is pyrimidine metabolism; dTTP biosynthesis. Functionally, catalyzes the reductive methylation of 2'-deoxyuridine-5'-monophosphate (dUMP) to 2'-deoxythymidine-5'-monophosphate (dTMP) while utilizing 5,10-methylenetetrahydrofolate (mTHF) as the methyl donor and reductant in the reaction, yielding dihydrofolate (DHF) as a by-product. This enzymatic reaction provides an intracellular de novo source of dTMP, an essential precursor for DNA biosynthesis. This Kineococcus radiotolerans (strain ATCC BAA-149 / DSM 14245 / SRS30216) protein is Thymidylate synthase.